Here is a 1134-residue protein sequence, read N- to C-terminus: Ovochymase-1 (1134 aa).

An N-terminal signal peptide occupies residues 1–22 (MGLLASAGLLLLLVIGHPRSLG). A propeptide spans 23 to 46 (LKCGIRMVNMKSKEPAVGSRFFSR) (activation peptide). Residues 38 to 296 (AVGSRFFSRI…LMDFITQNLF (259 aa)) form the Peptidase S1 1 domain. N-linked (GlcNAc...) asparagine glycosylation occurs at Asn52. Cysteines 72 and 88 form a disulfide. Residue His87 is the Charge relay system of the active site. N-linked (GlcNAc...) asparagine glycosylation occurs at Asn99. A Ca(2+)-binding site is contributed by Glu116. Asp139 functions as the Charge relay system in the catalytic mechanism. 3 cysteine pairs are disulfide-bonded: Cys173/Cys243, Cys204/Cys222, and Cys233/Cys262. Ser237 (charge relay system) is an active-site residue. CUB domains follow at residues 284–410 (VSEL…VTAV) and 419–531 (CGSL…FTIL). A glycan (N-linked (GlcNAc...) asparagine) is linked at Asn324. Disulfide bonds link Cys341–Cys373, Cys419–Cys446, and Cys473–Cys494. Residue Asn431 is glycosylated (N-linked (GlcNAc...) asparagine). Residue Asn507 is glycosylated (N-linked (GlcNAc...) asparagine). Residues 575–812 (IAGGEEACPH…FLDWIQSKIN (238 aa)) enclose the Peptidase S1 2 domain. Cys600 and Cys616 are joined by a disulfide. Active-site charge relay system residues include His615 and Asp664. 4 cysteine pairs are disulfide-bonded: Cys698-Cys769, Cys729-Cys747, Cys759-Cys788, and Cys846-Cys873. Ser763 functions as the Charge relay system in the catalytic mechanism. Residues 846–957 (CSEAELEKPR…GAFGISYIVL (112 aa)) form the CUB 3 domain. A glycan (N-linked (GlcNAc...) asparagine) is linked at Asn1106.

This sequence belongs to the peptidase S1 family.

The protein localises to the secreted. The protein is Ovochymase-1 (OVCH1) of Homo sapiens (Human).